A 785-amino-acid polypeptide reads, in one-letter code: Probable splicing factor 3A subunit 1 (785 aa).

Met1 carries the N-acetylmethionine modification. Positions 1–42 are disordered; that stretch reads MFSSMQILPLEAPPTDGKLGPLPPSQLTDQEVEERELQAEQN. The SURP motif 1 repeat unit spans residues 71 to 113; the sequence is IVEKTAQFVSKNGLEFEKRIIVSNEKNAKFNFLKSSDPYHAFY. Residues 124 to 175 form a disordered region; that stretch reads NKDGAQGTDDSDGTTDPQLDTGAADESEAGDTQPDLQAQFRIPSKPLEAPEP. Residues 193-235 form an SURP motif 2 repeat; that stretch reads IIKLTAQFVARNGKSFLTGLSNRENNNPQFHFMKPTHSMFTFF. Disordered regions lie at residues 522–554 and 639–713; these read NANG…GVPI and RPYG…PNEN. Composition is skewed to pro residues over residues 543–554 and 653–674; these read AALPPPRPGVPI and QPPP…PPLP. Over residues 677–686 the composition is skewed to basic and acidic residues; the sequence is PEAKRQKFDE. The region spanning 707–782 is the Ubiquitin-like domain; the sequence is VSKPNENDGQ…LTLSLRERGG (76 aa).

In terms of assembly, component of splicing factor SF3A which is composed of three subunits.

It localises to the nucleus. This Arabidopsis thaliana (Mouse-ear cress) protein is Probable splicing factor 3A subunit 1.